We begin with the raw amino-acid sequence, 369 residues long: RAB6-interacting golgin (369 aa).

The segment at 1-128 (MAQGWAGFSE…HNNVEILPPK (128 aa)) is disordered. A compositionally biased stretch (basic and acidic residues) spans 11–27 (EELRRLKQTKDPFEPQR). 2 stretches are compositionally biased toward polar residues: residues 46 to 61 (EQSQKLGLQDGSTSLL) and 82 to 93 (SPTLPSHFTLTS). A compositionally biased stretch (basic and acidic residues) spans 106–120 (QPKELGLENSHDGHN). Residues 145–297 (RWEVLQQEQR…EVERLLHEQE (153 aa)) adopt a coiled-coil conformation. The tract at residues 188–369 (IQKELQALDD…GNDISAALAT (182 aa)) is necessary for interaction with RCHY1. The tract at residues 334–369 (VSPKVDDQCGNSSSIPFLSPNCPNQEGNDISAALAT) is disordered. The segment covering 342 to 361 (CGNSSSIPFLSPNCPNQEGN) has biased composition (polar residues).

Belongs to the GORAB family. In terms of assembly, interacts with SCYL1. Interacts with RCHY1 and RAB6A/RAB6.

The protein localises to the cytoplasm. The protein resides in the golgi apparatus. This chain is RAB6-interacting golgin (GORAB), found in Homo sapiens (Human).